The following is a 164-amino-acid chain: Arginine repressor (164 aa).

Belongs to the ArgR family.

The protein resides in the cytoplasm. It participates in amino-acid biosynthesis; L-arginine biosynthesis [regulation]. Regulates arginine biosynthesis genes. The protein is Arginine repressor of Thermus thermophilus (strain ATCC BAA-163 / DSM 7039 / HB27).